Consider the following 567-residue polypeptide: Proline--tRNA ligase (567 aa).

The protein belongs to the class-II aminoacyl-tRNA synthetase family. ProS type 1 subfamily. In terms of assembly, homodimer.

It is found in the cytoplasm. It carries out the reaction tRNA(Pro) + L-proline + ATP = L-prolyl-tRNA(Pro) + AMP + diphosphate. Catalyzes the attachment of proline to tRNA(Pro) in a two-step reaction: proline is first activated by ATP to form Pro-AMP and then transferred to the acceptor end of tRNA(Pro). As ProRS can inadvertently accommodate and process non-cognate amino acids such as alanine and cysteine, to avoid such errors it has two additional distinct editing activities against alanine. One activity is designated as 'pretransfer' editing and involves the tRNA(Pro)-independent hydrolysis of activated Ala-AMP. The other activity is designated 'posttransfer' editing and involves deacylation of mischarged Ala-tRNA(Pro). The misacylated Cys-tRNA(Pro) is not edited by ProRS. This is Proline--tRNA ligase from Staphylococcus aureus (strain USA300).